We begin with the raw amino-acid sequence, 408 residues long: Acetate kinase (408 aa).

Residue Asn7 coordinates Mg(2+). ATP is bound at residue Lys14. Arg91 provides a ligand contact to substrate. Asp148 acts as the Proton donor/acceptor in catalysis. ATP-binding positions include 208 to 212 (HLGNG), 283 to 285 (DFR), and 331 to 335 (GIGEN). Glu384 lines the Mg(2+) pocket.

This sequence belongs to the acetokinase family. In terms of assembly, homodimer. The cofactor is Mg(2+). It depends on Mn(2+) as a cofactor.

It localises to the cytoplasm. It catalyses the reaction acetate + ATP = acetyl phosphate + ADP. The protein operates within metabolic intermediate biosynthesis; acetyl-CoA biosynthesis; acetyl-CoA from acetate: step 1/2. Its activity is regulated as follows. Inhibited by diethylpyrocarbonate, hydroxylamine and phenylglyoxal. Catalyzes the formation of acetyl phosphate from acetate and ATP. Can also catalyze the reverse reaction. Can also phosphorylate propionate, but has very low activity toward butyrate. This chain is Acetate kinase, found in Methanosarcina thermophila.